The primary structure comprises 212 residues: Protein-L-isoaspartate O-methyltransferase (212 aa).

Residue Ser60 is part of the active site.

Belongs to the methyltransferase superfamily. L-isoaspartyl/D-aspartyl protein methyltransferase family.

Its subcellular location is the cytoplasm. The enzyme catalyses [protein]-L-isoaspartate + S-adenosyl-L-methionine = [protein]-L-isoaspartate alpha-methyl ester + S-adenosyl-L-homocysteine. In terms of biological role, catalyzes the methyl esterification of L-isoaspartyl residues in peptides and proteins that result from spontaneous decomposition of normal L-aspartyl and L-asparaginyl residues. It plays a role in the repair and/or degradation of damaged proteins. The protein is Protein-L-isoaspartate O-methyltransferase of Methanococcus maripaludis (strain DSM 14266 / JCM 13030 / NBRC 101832 / S2 / LL).